Consider the following 460-residue polypeptide: Protein btn1 (460 aa).

11 consecutive transmembrane segments (helical) span residues 42–62, 76–96, 105–125, 135–155, 164–184, 195–215, 287–307, 323–343, 356–376, 378–398, and 428–448; these read VCVA…VILS, VVLL…PYFI, IIIF…SPPY, LAGI…FVGL, LAAW…AYAL, ATLL…FMVL, GLFF…YTIN, FAHF…GVFI, LYLP…QAVF, FIPS…LGGL, and AAGI…LCDW.

This sequence belongs to the battenin family.

The protein resides in the vacuole membrane. Its function is as follows. Involved in vacuolar transport and vacuole pH homeostasis. Also required for cytokinesis. This Aspergillus fumigatus (strain ATCC MYA-4609 / CBS 101355 / FGSC A1100 / Af293) (Neosartorya fumigata) protein is Protein btn1 (btn1).